The primary structure comprises 779 residues: Ribonucleoside-diphosphate reductase large subunit (779 aa).

Substrate is bound by residues S178, S193–C194, G222, N420–E424, and P614–S618. C194 and C440 form a disulfide bridge. N420 acts as the Proton acceptor in catalysis. The Cysteine radical intermediate role is filled by C422. E424 (proton acceptor) is an active-site residue.

The protein belongs to the ribonucleoside diphosphate reductase large chain family. Heterotetramer composed of a homodimer of the large subunit (R1) and a homodimer of the small subunit (R2). Larger multisubunit protein complex are also active, composed of (R1)n(R2)n.

The catalysed reaction is a 2'-deoxyribonucleoside 5'-diphosphate + [thioredoxin]-disulfide + H2O = a ribonucleoside 5'-diphosphate + [thioredoxin]-dithiol. Under complex allosteric control mediated by deoxynucleoside triphosphates and ATP binding. The type of nucleotide bound at the specificity site determines substrate preference. It seems probable that ATP makes the enzyme reduce CDP and UDP, dGTP favors ADP reduction and dTTP favors GDP reduction. Its function is as follows. Ribonucleoside-diphosphate reductase holoenzyme provides the precursors necessary for viral DNA synthesis. Allows virus growth in non-dividing cells. Catalyzes the biosynthesis of deoxyribonucleotides from the corresponding ribonucleotides. The polypeptide is Ribonucleoside-diphosphate reductase large subunit (Ornithodoros (relapsing fever ticks)).